The sequence spans 678 residues: ATP-dependent RNA helicase DHX58 (678 aa).

In terms of domain architecture, Helicase ATP-binding spans 11-188 (IMPALEGKNI…DGAINHVLQL (178 aa)). 24 to 31 (LPTGAGKT) is a binding site for ATP. Positions 131–134 (DECH) match the DECH box motif. One can recognise a Helicase C-terminal domain in the interval 350 to 514 (KLEMLEKILQ…QAVAAVQKMD (165 aa)). Positions 489-546 (ELKRELINEALETLMEQAVAAVQKMDQAEYQAKIRDLQQAALTKRAAQAAQRENQRQQ) form a coiled coil. In terms of domain architecture, RLR CTR spans 539–669 (QRENQRQQFP…PDFDFLQHCA (131 aa)). Zn(2+) is bound by residues Cys556, Cys559, Cys612, and Cys615. The tract at residues 572–655 (VEGTHHVNVN…RIQAKKWSRV (84 aa)) is RNA-binding.

The protein belongs to the helicase family. RLR subfamily. In terms of assembly, monomer in the absence of dsRNA. Homodimer in the presence of dsRNA. Interacts with RIGI (via CARD domain), MAVS/IPS1 and DDX60. Found in a complex with RIGI and IFIH1/MDA5. Interacts with ANKRD17. Directly interacts with ATG5 and ATG12, either as ATG5 and ATG12 monomers or as ATG12-ATG5 conjugates. As to quaternary structure, (Microbial infection) Interacts (via helicase C-terminal domain) with non-structural protein V of paramyxoviruses including human parainfluenza 2 virus, human parainfluenza 5 virus, measles virus, mumps virus, hendra virus and nipah virus. In terms of tissue distribution, expressed in testis, nerve and spleen. Also expressed in the brain.

It is found in the cytoplasm. It catalyses the reaction ATP + H2O = ADP + phosphate + H(+). Acts as a regulator of RIGI and IFIH1/MDA5 mediated antiviral signaling. Cannot initiate antiviral signaling as it lacks the CARD domain required for activating MAVS/IPS1-dependent signaling events. Can have both negative and positive regulatory functions related to RIGI and IFIH1/MDA5 signaling and this role in regulating signaling may be complex and could probably depend on characteristics of the infecting virus or target cells, or both. Its inhibitory action on RIG-I signaling may involve the following mechanisms: competition with RIGI for binding to the viral RNA, binding to RIGI and inhibiting its dimerization and interaction with MAVS/IPS1, competing with IKBKE in its binding to MAVS/IPS1 thereby inhibiting activation of interferon regulatory factor 3 (IRF3). Its positive regulatory role may involve unwinding or stripping nucleoproteins of viral RNA thereby facilitating their recognition by RIGI and IFIH1/MDA5. Involved in the innate immune response to various RNA viruses and some DNA viruses such as poxviruses and coronavirus SARS-CoV-2, and also to the bacterial pathogen Listeria monocytogenes. Can bind both ssRNA and dsRNA, with a higher affinity for dsRNA. Shows a preference to 5'-triphosphorylated RNA, although it can recognize RNA lacking a 5'-triphosphate. This is ATP-dependent RNA helicase DHX58 from Homo sapiens (Human).